The sequence spans 162 residues: Protein-export protein SecB (162 aa).

Belongs to the SecB family. Homotetramer, a dimer of dimers. One homotetramer interacts with 1 SecA dimer.

Its subcellular location is the cytoplasm. In terms of biological role, one of the proteins required for the normal export of preproteins out of the cell cytoplasm. It is a molecular chaperone that binds to a subset of precursor proteins, maintaining them in a translocation-competent state. It also specifically binds to its receptor SecA. The sequence is that of Protein-export protein SecB from Hamiltonella defensa subsp. Acyrthosiphon pisum (strain 5AT).